A 215-amino-acid polypeptide reads, in one-letter code: Short neuropeptide F (215 aa).

The signal sequence occupies residues 1–22 (MCRINFTTLSLILVLWSGSLMS). Residues 23–56 (EPSQNADGSIKGLYEYLLQREYAAPVSYADHQIK) constitute a propeptide that is removed on maturation. F69 and F101 each carry phenylalanine amide. Tryptophan amide is present on W129. Position 157 is a phenylalanine amide (F157). Residues 160–215 (SDPSWAMFNEHQLDEQQFADATRQPSKTLRGDEPTSIESTEQVESEENSPSNMDEK) constitute a propeptide that is removed on maturation. The disordered stretch occupies residues 173–215 (DEQQFADATRQPSKTLRGDEPTSIESTEQVESEENSPSNMDEK).

The protein belongs to the NPY family.

The protein localises to the secreted. Functionally, plays a role in controlling food intake and regulating body size. The polypeptide is Short neuropeptide F (Aedes aegypti (Yellowfever mosquito)).